The following is a 246-amino-acid chain: Probable transcriptional regulatory protein WD_0484 (246 aa).

The interval 1-22 is disordered; the sequence is MAGHSQFSNIKHRKGAQDAKRS.

Belongs to the TACO1 family.

The protein resides in the cytoplasm. The polypeptide is Probable transcriptional regulatory protein WD_0484 (Wolbachia pipientis wMel).